The primary structure comprises 280 residues: L-proline cis-4-hydroxylase (280 aa).

Positions 106, 108, and 154 each coordinate Fe cation. Residue R164 coordinates 2-oxoglutarate.

This sequence belongs to the L-proline cis-4-/cis-3-hydroxylase family. The cofactor is Fe(2+).

It catalyses the reaction L-proline + 2-oxoglutarate + O2 = cis-4-hydroxy-L-proline + succinate + CO2. With respect to regulation, inhibited by metal ions such as Co(2+), Zn(2+), Cu(2+) or Ni(2+). Is also inhibited by EDTA or diethylpyrocarbonate (DEPC) in vitro. Unlike the procollagen-proline cis-3- and trans-4-hydroxylases from mammals, does not necessarily require L-ascorbate for activity although it does increase the activity of the enzyme. Functionally, dioxygenase that catalyzes the 2-oxoglutarate-dependent selective hydroxylation of free L-proline to cis-4-hydroxy-L-proline (cis-4-Hyp). The protein is L-proline cis-4-hydroxylase of Mesorhizobium japonicum (strain LMG 29417 / CECT 9101 / MAFF 303099) (Mesorhizobium loti (strain MAFF 303099)).